The primary structure comprises 200 residues: Synaptobrevin homolog YKT6 (200 aa).

The 123-residue stretch at 7–129 (GVFRSGGEKA…LKMKQLDTYI (123 aa)) folds into the Longin domain. The v-SNARE coiled-coil homology domain maps to 140–200 (AIMKVQQELD…KKSNSCCIIM (61 aa)). Thr-158 carries the phosphothreonine modification. Residue Cys-196 is the site of S-palmitoyl cysteine attachment. Cys-197 carries the cysteine methyl ester modification. Cys-197 is lipidated: S-farnesyl cysteine. The propeptide at 198-200 (IIM) is removed in mature form.

The protein belongs to the synaptobrevin family.

The protein localises to the cell membrane. The polypeptide is Synaptobrevin homolog YKT6 (YKT6) (Saccharomyces cerevisiae (strain ATCC 204508 / S288c) (Baker's yeast)).